Consider the following 297-residue polypeptide: Diaminopimelate epimerase (297 aa).

Positions 13, 46, and 66 each coordinate substrate. Residue Cys-76 is the Proton donor of the active site. Residues 77 to 78, Asn-174, Asn-207, and 225 to 226 each bind substrate; these read GN and ER. The active-site Proton acceptor is Cys-234. 235-236 contacts substrate; sequence GT.

It belongs to the diaminopimelate epimerase family. In terms of assembly, homodimer.

Its subcellular location is the cytoplasm. The catalysed reaction is (2S,6S)-2,6-diaminopimelate = meso-2,6-diaminopimelate. The protein operates within amino-acid biosynthesis; L-lysine biosynthesis via DAP pathway; DL-2,6-diaminopimelate from LL-2,6-diaminopimelate: step 1/1. Its function is as follows. Catalyzes the stereoinversion of LL-2,6-diaminopimelate (L,L-DAP) to meso-diaminopimelate (meso-DAP), a precursor of L-lysine and an essential component of the bacterial peptidoglycan. This Leptothrix cholodnii (strain ATCC 51168 / LMG 8142 / SP-6) (Leptothrix discophora (strain SP-6)) protein is Diaminopimelate epimerase.